We begin with the raw amino-acid sequence, 584 residues long: 2-isopropylmalate synthase (584 aa).

A Pyruvate carboxyltransferase domain is found at 40–314 (PRWCAVDLRD…DPQIDFSDIE (275 aa)). Residues Asp49, His253, His255, and Asn289 each contribute to the Mg(2+) site. The regulatory domain stretch occupies residues 456-584 (SRDGSGSTWG…VRDAQEAAQD (129 aa)).

Belongs to the alpha-IPM synthase/homocitrate synthase family. LeuA type 2 subfamily. Homodimer. Requires Mg(2+) as cofactor.

The protein localises to the cytoplasm. The catalysed reaction is 3-methyl-2-oxobutanoate + acetyl-CoA + H2O = (2S)-2-isopropylmalate + CoA + H(+). Its pathway is amino-acid biosynthesis; L-leucine biosynthesis; L-leucine from 3-methyl-2-oxobutanoate: step 1/4. In terms of biological role, catalyzes the condensation of the acetyl group of acetyl-CoA with 3-methyl-2-oxobutanoate (2-ketoisovalerate) to form 3-carboxy-3-hydroxy-4-methylpentanoate (2-isopropylmalate). The chain is 2-isopropylmalate synthase from Kocuria rhizophila (strain ATCC 9341 / DSM 348 / NBRC 103217 / DC2201).